A 530-amino-acid chain; its full sequence is Phosphoenolpyruvate carboxykinase (ATP) (530 aa).

The substrate site is built by arginine 58, tyrosine 195, and lysine 201. ATP-binding positions include lysine 201, histidine 220, and 236 to 244 (GLSGTGKTT). The Mn(2+) site is built by lysine 201 and histidine 220. Aspartate 257 provides a ligand contact to Mn(2+). Residues glutamate 285, arginine 321, 440 to 441 (RI), and threonine 446 each bind ATP. A substrate-binding site is contributed by arginine 321.

This sequence belongs to the phosphoenolpyruvate carboxykinase (ATP) family. The cofactor is Mn(2+).

It is found in the cytoplasm. It catalyses the reaction oxaloacetate + ATP = phosphoenolpyruvate + ADP + CO2. Its pathway is carbohydrate biosynthesis; gluconeogenesis. In terms of biological role, involved in the gluconeogenesis. Catalyzes the conversion of oxaloacetate (OAA) to phosphoenolpyruvate (PEP) through direct phosphoryl transfer between the nucleoside triphosphate and OAA. The chain is Phosphoenolpyruvate carboxykinase (ATP) from Staphylococcus aureus (strain bovine RF122 / ET3-1).